Here is a 506-residue protein sequence, read N- to C-terminus: GTPase Der (506 aa).

2 consecutive EngA-type G domains span residues 3 to 166 and 218 to 391; these read PVVA…GEQL and IKIA…ACAT. Residues 9 to 16, 56 to 60, 118 to 121, 224 to 231, 271 to 275, and 336 to 339 each bind GTP; these read GRPNVGKS, DTGGI, NKTD, DTAGV, and NKWD. The KH-like domain occupies 392-476; the sequence is QKTSTSMLTR…PIRIQFQEGN (85 aa).

This sequence belongs to the TRAFAC class TrmE-Era-EngA-EngB-Septin-like GTPase superfamily. EngA (Der) GTPase family. Associates with the 50S ribosomal subunit.

GTPase that plays an essential role in the late steps of ribosome biogenesis. In Actinobacillus pleuropneumoniae serotype 5b (strain L20), this protein is GTPase Der.